Consider the following 104-residue polypeptide: Large ribosomal subunit protein bL21 (104 aa).

The protein belongs to the bacterial ribosomal protein bL21 family. As to quaternary structure, part of the 50S ribosomal subunit. Contacts protein L20.

In terms of biological role, this protein binds to 23S rRNA in the presence of protein L20. The chain is Large ribosomal subunit protein bL21 from Desulfosudis oleivorans (strain DSM 6200 / JCM 39069 / Hxd3) (Desulfococcus oleovorans).